Consider the following 646-residue polypeptide: MMSKHPHSPSTPQDETPSVPGRRRFMNSAALAGLATVVACTDKGAPAGSAAATGVAATAEEHTVAGLHPKPGQLDTYYGLWSGGHTGDMRVMGMPSGREIHRIPMFVPDALVGWGITNESKKVMGTRPDGRLKYTVGDTHHVHASYKDGNYDGRYAWINDKINSRLGRVRLDYFICDKITELPNVQGFHGIFPDKRDPVDPQINYTTRVFCGGEFAIPLPNTAGIDDPAKYRSLFTCVDAESMEVRWQVLIDGNCDLVATSYDGKLAATNQYNTEMGAHYEDMMSAERDACLFFNVARIEAAVKAGRFKTIGDSKVPVVDGTHAANQDPKTALTAYVSVPKNPHGVNASPDQKYFICAGKLSPTATVIELARVLDWFDGKLAKIDDAIVAEVELGLGPLHTAFDGRGNAYTTLFLDSQIVKWNIDAAIRFHKGDKNAKYVVDRLDVHYQPGHLNASQSETVAADGKFLAVGCKFSKDRFLPVGPLHPENEQFIDISGDKMVLLQDHPIRSEPHDFIIFKRELLHPKQIYSLDDFPLATKDPKQSGVVRNGKKVTVRLTSQAPSYSLREFKLKKGDEVTLILTNLDKVEDLTHGFAIPKYDINFIVNPQETASVTFIADKPGVFWCYCTHFCHALHLEMRSRMIVEA.

The disordered stretch occupies residues 1-21 (MMSKHPHSPSTPQDETPSVPG). The segment at residues 1 to 52 (MMSKHPHSPSTPQDETPSVPGRRRFMNSAALAGLATVVACTDKGAPAGSAAA) is a signal peptide (tat-type signal). Residues His-140, His-141, and His-189 each contribute to the Cu cation site. Positions 272, 275, 283, 289, and 342 each coordinate Ca(2+). Residues His-344, His-400, and His-452 each coordinate Cu cation. Ca(2+) is bound by residues Lys-473 and Glu-488. His-513, His-592, Cys-627, His-629, Cys-631, His-635, and Met-638 together coordinate Cu cation. A COX2-like region spans residues 551-646 (KKVTVRLTSQ…EMRSRMIVEA (96 aa)).

It belongs to the NosZ family. In the C-terminal section; belongs to the cytochrome c oxidase subunit 2 family. As to quaternary structure, homodimer. Requires Ca(2+) as cofactor. It depends on Cu cation as a cofactor. Predicted to be exported by the Tat system. The position of the signal peptide cleavage has not been experimentally proven.

The protein resides in the periplasm. The catalysed reaction is N2 + 2 Fe(III)-[cytochrome c] + H2O = nitrous oxide + 2 Fe(II)-[cytochrome c] + 2 H(+). It functions in the pathway nitrogen metabolism; nitrate reduction (denitrification); dinitrogen from nitrate: step 4/4. Functionally, nitrous-oxide reductase is part of a bacterial respiratory system which is activated under anaerobic conditions in the presence of nitrate or nitrous oxide. The protein is Nitrous-oxide reductase (nosZ) of Ralstonia nicotianae (strain ATCC BAA-1114 / GMI1000) (Ralstonia solanacearum).